The sequence spans 208 residues: Uridine kinase (208 aa).

An ATP-binding site is contributed by 11-18 (GGTGSGKS).

It belongs to the uridine kinase family.

The protein localises to the cytoplasm. The catalysed reaction is uridine + ATP = UMP + ADP + H(+). It carries out the reaction cytidine + ATP = CMP + ADP + H(+). It participates in pyrimidine metabolism; CTP biosynthesis via salvage pathway; CTP from cytidine: step 1/3. Its pathway is pyrimidine metabolism; UMP biosynthesis via salvage pathway; UMP from uridine: step 1/1. The sequence is that of Uridine kinase from Clostridium perfringens (strain SM101 / Type A).